A 58-amino-acid polypeptide reads, in one-letter code: Large ribosomal subunit protein uL30 (58 aa).

Belongs to the universal ribosomal protein uL30 family. As to quaternary structure, part of the 50S ribosomal subunit.

The polypeptide is Large ribosomal subunit protein uL30 (Cytophaga hutchinsonii (strain ATCC 33406 / DSM 1761 / CIP 103989 / NBRC 15051 / NCIMB 9469 / D465)).